A 218-amino-acid chain; its full sequence is Pyridoxine/pyridoxamine 5'-phosphate oxidase (218 aa).

Substrate contacts are provided by residues 14–17 and lysine 72; that span reads RREY. Residues 67–72, 82–83, arginine 88, lysine 89, and glutamine 111 contribute to the FMN site; these read RIVLLK and YT. Tyrosine 129, arginine 133, and serine 137 together coordinate substrate. Residues 146–147 and tryptophan 191 each bind FMN; that span reads QS. 197-199 contacts substrate; sequence RLH. Arginine 201 contributes to the FMN binding site.

It belongs to the pyridoxamine 5'-phosphate oxidase family. Homodimer. Requires FMN as cofactor.

It catalyses the reaction pyridoxamine 5'-phosphate + O2 + H2O = pyridoxal 5'-phosphate + H2O2 + NH4(+). The enzyme catalyses pyridoxine 5'-phosphate + O2 = pyridoxal 5'-phosphate + H2O2. It participates in cofactor metabolism; pyridoxal 5'-phosphate salvage; pyridoxal 5'-phosphate from pyridoxamine 5'-phosphate: step 1/1. Its pathway is cofactor metabolism; pyridoxal 5'-phosphate salvage; pyridoxal 5'-phosphate from pyridoxine 5'-phosphate: step 1/1. Functionally, catalyzes the oxidation of either pyridoxine 5'-phosphate (PNP) or pyridoxamine 5'-phosphate (PMP) into pyridoxal 5'-phosphate (PLP). This is Pyridoxine/pyridoxamine 5'-phosphate oxidase from Salmonella paratyphi B (strain ATCC BAA-1250 / SPB7).